A 371-amino-acid polypeptide reads, in one-letter code: Maltose/maltodextrin import ATP-binding protein MalK (371 aa).

The 231-residue stretch at 4 to 234 folds into the ABC transporter domain; that stretch reads VQLQNVTKAW…PADRFVAGFI (231 aa). An ATP-binding site is contributed by 36–43; that stretch reads GPSGCGKS.

Belongs to the ABC transporter superfamily. Maltooligosaccharide importer (TC 3.A.1.1.1) family. As to quaternary structure, the complex is composed of two ATP-binding proteins (MalK), two transmembrane proteins (MalG and MalK) and a solute-binding protein (MalE).

It localises to the cell inner membrane. It carries out the reaction D-maltose(out) + ATP + H2O = D-maltose(in) + ADP + phosphate + H(+). Its function is as follows. Part of the ABC transporter complex MalEFGK involved in maltose/maltodextrin import. Responsible for energy coupling to the transport system. This Escherichia coli O157:H7 protein is Maltose/maltodextrin import ATP-binding protein MalK.